The following is a 296-amino-acid chain: MKIAVYGKGGIGKSTTSCNISIALARRGKKVLQIGCDPKHDSTFTLTGFLIPTIIDTLQSKDYHYEDVWPEDVIYKGYGGVDCVEAGGPPAGAGCGGYVVGETVKLLKELNAFYEYDVILFDVLGDVVCGGFAAPLNYADYCIIITDNGFDALFAANRIAASVREKARTHPLRLAGLVGNRTSKRDLIDKYVEACPMPVLEVLPLIEDIRVSRVKGKTLFEMVETEKSLNYVCEFYLNIADQLLARPEGVVPNEVPDRELFSLLSDFYLNPVNTSNESTNSSIEANQEVESSFLII.

ATP is bound by residues 10–15 and lysine 39; that span reads GIGKST. Residue serine 14 coordinates Mg(2+). [4Fe-4S] cluster contacts are provided by cysteine 95 and cysteine 129. 180-181 serves as a coordination point for ATP; the sequence is NR.

Belongs to the NifH/BchL/ChlL family. Homodimer. Protochlorophyllide reductase is composed of three subunits; ChlL, ChlN and ChlB. Requires [4Fe-4S] cluster as cofactor.

The protein resides in the plastid. It is found in the chloroplast. The catalysed reaction is chlorophyllide a + oxidized 2[4Fe-4S]-[ferredoxin] + 2 ADP + 2 phosphate = protochlorophyllide a + reduced 2[4Fe-4S]-[ferredoxin] + 2 ATP + 2 H2O. It functions in the pathway porphyrin-containing compound metabolism; chlorophyll biosynthesis (light-independent). Its function is as follows. Component of the dark-operative protochlorophyllide reductase (DPOR) that uses Mg-ATP and reduced ferredoxin to reduce ring D of protochlorophyllide (Pchlide) to form chlorophyllide a (Chlide). This reaction is light-independent. The L component serves as a unique electron donor to the NB-component of the complex, and binds Mg-ATP. The polypeptide is Light-independent protochlorophyllide reductase iron-sulfur ATP-binding protein (Mesostigma viride (Green alga)).